The sequence spans 198 residues: Putative protein-methionine-sulfoxide reductase subunit YedZ1 (198 aa).

4 helical membrane-spanning segments follow: residues 12–32 (WLRV…MSGW), 63–83 (FAAM…NIFS), 124–144 (AAYL…LVLW), and 167–187 (FIGM…VALV).

The protein belongs to the HupC/HyaC/HydC family.

The protein localises to the cell inner membrane. In terms of biological role, part of the YedY1-YedZ1 system that may repair oxidized proteins containing methionine sulfoxide residues (Met-O). This Azospira oryzae (strain ATCC BAA-33 / DSM 13638 / PS) (Dechlorosoma suillum) protein is Putative protein-methionine-sulfoxide reductase subunit YedZ1.